Reading from the N-terminus, the 388-residue chain is Granulocyte-macrophage colony-stimulating factor receptor subunit alpha (388 aa).

Residues 1–29 (MTSSHAMNITPLAQLALLFSTLLLPGTQA) form the signal peptide. At 30–327 (LLAPTTPDAG…PLEAEDTRVP (298 aa)) the chain is on the extracellular side. N-linked (GlcNAc...) asparagine glycosylation is found at Asn-43, Asn-63, Asn-106, Asn-132, Asn-165, and Asn-237. A Fibronectin type-III domain is found at 228–324 (PPRDVTASCN…PAHPLEAEDT (97 aa)). Residues 310 to 314 (WGEWS) carry the WSXWS motif motif. The helical transmembrane segment at 328–348 (GALLYAVTACAVLLCALALGV) threads the bilayer. The Cytoplasmic portion of the chain corresponds to 349–388 (TCRRFEVTRRLFPPIPGIRDKVSDDVRVNPETLRKDLLQP). Residues 359-367 (LFPPIPGIR) carry the Box 1 motif motif.

The protein belongs to the type I cytokine receptor family. Type 5 subfamily. Heterodimer of an alpha and a beta subunit. The beta subunit is common to the IL3, IL5 and GM-CSF receptors. The signaling GM-CSF receptor complex is a dodecamer of two head-to-head hexamers of two alpha, two beta, and two ligand subunits.

The protein resides in the membrane. Its function is as follows. Low affinity receptor for granulocyte-macrophage colony-stimulating factor. Transduces a signal that results in the proliferation, differentiation, and functional activation of hematopoietic cells. The chain is Granulocyte-macrophage colony-stimulating factor receptor subunit alpha (Csf2ra) from Mus musculus (Mouse).